The chain runs to 656 residues: DNA mismatch repair protein MutL (656 aa).

It belongs to the DNA mismatch repair MutL/HexB family.

Functionally, this protein is involved in the repair of mismatches in DNA. It is required for dam-dependent methyl-directed DNA mismatch repair. May act as a 'molecular matchmaker', a protein that promotes the formation of a stable complex between two or more DNA-binding proteins in an ATP-dependent manner without itself being part of a final effector complex. This is DNA mismatch repair protein MutL from Lactococcus lactis subsp. lactis (strain IL1403) (Streptococcus lactis).